Consider the following 124-residue polypeptide: Period circadian protein (124 aa).

The segment at threonine 30–asparagine 124 is disordered. The span at serine 71–serine 96 shows a compositional bias: low complexity. Positions serine 97–glycine 107 are enriched in gly residues.

In terms of assembly, forms a heterodimer with timeless (TIM); the complex then translocates into the nucleus. Phosphorylated with a circadian rhythmicity, probably by the double-time protein (dbt). Phosphorylation could be implicated in the stability of per monomer and in the formation of heterodimer per-tim.

The protein localises to the nucleus. It localises to the cytoplasm. It is found in the perinuclear region. Essential for biological clock functions. Determines the period length of circadian and ultradian rhythms; an increase in PER dosage leads to shortened circadian rhythms and a decrease leads to lengthened circadian rhythms. Essential for the circadian rhythmicity of locomotor activity, eclosion behavior, and for the rhythmic component of the male courtship song that originates in the thoracic nervous system. The biological cycle depends on the rhythmic formation and nuclear localization of the TIM-PER complex. Light induces the degradation of TIM, which promotes elimination of PER. Nuclear activity of the heterodimer coordinatively regulates PER and TIM transcription through a negative feedback loop. Behaves as a negative element in circadian transcriptional loop. Does not appear to bind DNA, suggesting indirect transcriptional inhibition. In Hirtodrosophila pictiventris (Fruit fly), this protein is Period circadian protein (per).